The primary structure comprises 538 residues: indole-2-monooxygenase (538 aa).

Residues 22-42 traverse the membrane as a helical segment; that stretch reads ALLLAIPFSLLLLPLLLRYLA. Cys-481 contacts heme.

It belongs to the cytochrome P450 family. It depends on heme as a cofactor.

It localises to the membrane. The enzyme catalyses indole + reduced [NADPH--hemoprotein reductase] + O2 = indolin-2-one + oxidized [NADPH--hemoprotein reductase] + H2O + H(+). The protein operates within secondary metabolite biosynthesis; 2,4-dihydroxy-1,4-benzoxazin-3-one biosynthesis; 2,4-dihydroxy-1,4-benzoxazin-3-one from indoleglycerol phosphate: step 2/5. In terms of biological role, catalyzes the conversion of indole to indolin-2-one. The protein is indole-2-monooxygenase (CYP71C4) of Zea mays (Maize).